We begin with the raw amino-acid sequence, 302 residues long: CASP-like protein 4A2 (302 aa).

The span at 1–13 shows a compositional bias: polar residues; it reads MALQAQQQATPSP. A disordered region spans residues 1–134; the sequence is MALQAQQQAT…APPPHAQVRS (134 aa). The Cytoplasmic portion of the chain corresponds to 1-154; it reads MALQAQQQAT…RKRRAAVMQR (154 aa). The span at 40 to 60 shows a compositional bias: low complexity; the sequence is VVVASTHHAAAAARYVPPRAT. Pro residues predominate over residues 99–129; that stretch reads KTPPPAPPLPAAPPPPPAASPAPAPRAPPPH. Residues 155-175 traverse the membrane as a helical segment; that stretch reads AALLARAAAAGLCLAALAVLA. The Extracellular segment spans residues 176–197; it reads SDTRRGWARDSYSNYAQFRYSE. The chain crosses the membrane as a helical span at residues 198–218; the sequence is AVNVVGFLYSVFQFVALAELM. Topologically, residues 219–238 are cytoplasmic; the sequence is RRNKHLIPHPKRDLFDFTMD. Residues 239-256 traverse the membrane as a helical segment; it reads QVVAYLLISSSSSATARA. Residues 257–273 are Extracellular-facing; that stretch reads SDLIENWGSDSFPSMAN. Residues 274-294 form a helical membrane-spanning segment; sequence GSIAISFVAFVVFAICSLISA. At 295–302 the chain is on the cytoplasmic side; the sequence is YNLFRRDM.

This sequence belongs to the Casparian strip membrane proteins (CASP) family. Homodimer and heterodimers.

The protein localises to the cell membrane. This Zea mays (Maize) protein is CASP-like protein 4A2.